The primary structure comprises 1136 residues: Probable phospholipid-transporting ATPase IIB (1136 aa).

Over 1–145 (MADQIPLYPV…IKNQKYNIFT (145 aa)) the chain is Cytoplasmic. The helical transmembrane segment at 146–166 (FIPGVLYEQFKFFLNLYFLIV) threads the bilayer. At 167 to 174 (SCSQFVPA) the chain is on the extracellular side. The helical transmembrane segment at 175-195 (LKIGYLYTYWAPLGFVLAVTI) threads the bilayer. The Cytoplasmic portion of the chain corresponds to 196 to 383 (MREAVDEFRR…LDLELNQLTK (188 aa)). Residues 384-404 (ALFLALVALSVVMVTLQGFAG) traverse the membrane as a helical segment. Residues 405-408 (PWYR) lie on the Extracellular side of the membrane. Residues 409-429 (SLFRFLLLFSYIIPISLRVNL) traverse the membrane as a helical segment. The Cytoplasmic segment spans residues 430-939 (DMGKAAYGWM…ALGQFVMHRG (510 aa)). Aspartate 469 functions as the 4-aspartylphosphate intermediate in the catalytic mechanism. Aspartate 469, lysine 470, and threonine 471 together coordinate ATP. Residue aspartate 469 participates in Mg(2+) binding. Threonine 471 serves as a coordination point for Mg(2+). A disordered region spans residues 514–538 (AGGSSAASTPPRKAPSSAPKVRRSV). Positions 591, 633, 638, 657, 686, 687, 766, 767, 768, 848, and 854 each coordinate ATP. Position 874 (aspartate 874) interacts with Mg(2+). 2 residues coordinate ATP: asparagine 877 and aspartate 878. Aspartate 878 is a binding site for Mg(2+). A helical membrane pass occupies residues 940–960 (LIISTMQAVFSSVFYFASVPL). Topologically, residues 961–962 (YQ) are extracellular. Residues 963 to 983 (GFLMVGYATVYTMFPVFSLVL) form a helical membrane-spanning segment. At 984–1012 (DQDVKPEMAMLYPELYKDLTKGRSLSFKT) the chain is on the cytoplasmic side. The chain crosses the membrane as a helical span at residues 1013–1033 (FLVWVLISIYQGGILMFGALV). The Extracellular segment spans residues 1034-1041 (LFESEFVH). A helical transmembrane segment spans residues 1042 to 1062 (VVAISFTALVLTELLMVALTV). Topologically, residues 1063–1066 (RTWH) are cytoplasmic. A helical membrane pass occupies residues 1067–1087 (WLMVVAQLLSLGCYVASLAFL). The Extracellular segment spans residues 1088 to 1098 (NEYFDVAFITT). A helical transmembrane segment spans residues 1099 to 1119 (VTFVWKVSAITVVSCLPLYVL). Topologically, residues 1120–1136 (KYLKRKLSPPSYSKLSS) are cytoplasmic.

The protein belongs to the cation transport ATPase (P-type) (TC 3.A.3) family. Type IV subfamily. Mg(2+) serves as cofactor.

Its subcellular location is the golgi apparatus. It is found in the trans-Golgi network membrane. It carries out the reaction ATP + H2O + phospholipidSide 1 = ADP + phosphate + phospholipidSide 2.. This is Probable phospholipid-transporting ATPase IIB (ATP9B) from Bos taurus (Bovine).